The chain runs to 313 residues: Protein FixB (313 aa).

Residue 255–283 (LYLAVGISGQIQHMVGANASQTIFAINKD) coordinates FAD.

Belongs to the ETF alpha-subunit/FixB family. Heterodimer of FixA and FixB.

It participates in amine and polyamine metabolism; carnitine metabolism. In terms of biological role, required for anaerobic carnitine reduction. May bring reductant to CaiA. The chain is Protein FixB from Escherichia coli O81 (strain ED1a).